The primary structure comprises 265 residues: Osteoclast-associated immunoglobulin-like receptor (265 aa).

The first 18 residues, 1-18, serve as a signal peptide directing secretion; that stretch reads MVLSLILQLSTLWPACRA. Over 19–231 the chain is Extracellular; it reads DFTPTAPLAS…LDYTQGNLIR (213 aa). Ig-like domains follow at residues 22-115 and 125-218; these read PTAP…SQPS and QLPR…SFEG. A glycan (N-linked (GlcNAc...) asparagine) is linked at N47. C52 and C99 are disulfide-bonded. N144 is a glycosylation site (N-linked (GlcNAc...) asparagine). The chain crosses the membrane as a helical span at residues 232–248; it reads LGLAGMVLICLGIIVTC. Residues 249–265 are Cytoplasmic-facing; that stretch reads DWHSRSSAFDGLLPQQN.

This sequence belongs to the leukocyte receptor complex/polymeric immunoglobulin receptor (PIR/LRC) family. Specifically expressed in preosteoclasts or mature osteoclasts.

It is found in the cell membrane. Functionally, regulator of osteoclastogenesis which plays an important bone-specific function in osteoclast differentiation. This is Osteoclast-associated immunoglobulin-like receptor (Oscar) from Mus musculus (Mouse).